A 671-amino-acid polypeptide reads, in one-letter code: Palmitoleoyl-protein carboxylesterase NOTUM (671 aa).

A signal peptide spans Met-1–Ser-46. Asn-95 carries an N-linked (GlcNAc...) asparagine glycan. Residues Ser-237 and Asp-338 each act as charge relay system in the active site. Asn-372 is a glycosylation site (N-linked (GlcNAc...) asparagine). The active-site Charge relay system is the His-384. Positions His-411 to Pro-592 are disordered. Over residues Asn-439–His-454 the composition is skewed to basic residues. Residues Leu-470–Arg-486 show a composition bias toward basic and acidic residues. The span at Gln-487–Gln-497 shows a compositional bias: basic residues. Basic and acidic residues predominate over residues Gln-505–Ser-514. Over residues Pro-570–Thr-583 the composition is skewed to polar residues. 2 N-linked (GlcNAc...) asparagine glycosylation sites follow: Asn-578 and Asn-612.

This sequence belongs to the pectinacetylesterase family. Notum subfamily.

The protein localises to the secreted. It localises to the cell surface. It carries out the reaction [Wnt protein]-O-(9Z)-hexadecenoyl-L-serine + H2O = [Wnt protein]-L-serine + (9Z)-hexadecenoate + H(+). Carboxylesterase that acts as a key negative regulator of the Wnt signaling pathway by specifically mediating depalmitoleoylation of WNT proteins. Serine palmitoleoylation of WNT proteins is required for efficient binding to frizzled receptors. Also acts as a regulator of long-range activity of Hedgehog (hh), possibly by regulating the switch between low and high level hh pathway signaling. The polypeptide is Palmitoleoyl-protein carboxylesterase NOTUM (Drosophila melanogaster (Fruit fly)).